A 340-amino-acid polypeptide reads, in one-letter code: Ferrochelatase (340 aa).

Fe cation contacts are provided by histidine 189 and glutamate 292.

Belongs to the ferrochelatase family.

Its subcellular location is the cytoplasm. The catalysed reaction is heme b + 2 H(+) = protoporphyrin IX + Fe(2+). It participates in porphyrin-containing compound metabolism; protoheme biosynthesis; protoheme from protoporphyrin-IX: step 1/1. Functionally, catalyzes the ferrous insertion into protoporphyrin IX. This is Ferrochelatase from Pseudomonas fluorescens biotype C.